The following is a 369-amino-acid chain: D-alanine--D-alanine ligase (369 aa).

Positions Lys-152–Glu-359 constitute an ATP-grasp domain. An ATP-binding site is contributed by Arg-180–Glu-235. Asp-314, Glu-326, and Asn-328 together coordinate Mg(2+).

Belongs to the D-alanine--D-alanine ligase family. Mg(2+) is required as a cofactor. Requires Mn(2+) as cofactor.

It localises to the cytoplasm. It carries out the reaction 2 D-alanine + ATP = D-alanyl-D-alanine + ADP + phosphate + H(+). The protein operates within cell wall biogenesis; peptidoglycan biosynthesis. Its function is as follows. Cell wall formation. The sequence is that of D-alanine--D-alanine ligase from Mycobacterium avium (strain 104).